Reading from the N-terminus, the 201-residue chain is FMN-dependent NADH:quinone oxidoreductase (201 aa).

FMN-binding positions include Ser-9, 16–18 (SVS), and 93–96 (MYNF).

The protein belongs to the azoreductase type 1 family. Homodimer. The cofactor is FMN.

It carries out the reaction 2 a quinone + NADH + H(+) = 2 a 1,4-benzosemiquinone + NAD(+). The enzyme catalyses N,N-dimethyl-1,4-phenylenediamine + anthranilate + 2 NAD(+) = 2-(4-dimethylaminophenyl)diazenylbenzoate + 2 NADH + 2 H(+). In terms of biological role, quinone reductase that provides resistance to thiol-specific stress caused by electrophilic quinones. Also exhibits azoreductase activity. Catalyzes the reductive cleavage of the azo bond in aromatic azo compounds to the corresponding amines. This Gluconacetobacter diazotrophicus (strain ATCC 49037 / DSM 5601 / CCUG 37298 / CIP 103539 / LMG 7603 / PAl5) protein is FMN-dependent NADH:quinone oxidoreductase.